Consider the following 154-residue polypeptide: UPF0039 protein sll0451 (154 aa).

The N-acetyltransferase domain maps to 8 to 151 (QRFNDISGEA…EHISMIFRVP (144 aa)).

The protein belongs to the UPF0039 (ElaA) family.

This chain is UPF0039 protein sll0451, found in Synechocystis sp. (strain ATCC 27184 / PCC 6803 / Kazusa).